A 221-amino-acid chain; its full sequence is Transmembrane emp24 domain-containing protein 3 (221 aa).

An N-terminal signal peptide occupies residues 1-25; that stretch reads MVHEAPHASSFQMLLQLLLLLLLRA. Residues 28-184 lie on the Lumenal side of the membrane; that stretch reads LRSAELTFEL…RAEDLNSRVS (157 aa). The 83-residue stretch at 42–124 folds into the GOLD domain; that stretch reads KQCFHEEVEQ…HKTVYFDFQV (83 aa). R103 is modified (dimethylated arginine). A helical transmembrane segment spans residues 185–205; it reads YWSVGETIALFVVSFSQVLLL. The Cytoplasmic segment spans residues 206-221; it reads KSFFTEKRPVNRAVHS. Residues 208–209 carry the COPII vesicle coat-binding motif; that stretch reads FF. Positions 208 to 221 match the COPI vesicle coat-binding motif; sequence FFTEKRPVNRAVHS.

The protein belongs to the EMP24/GP25L family. As to quaternary structure, monomer in endoplasmic reticulum, endoplasmic reticulum-Golgi intermediate compartment and cis-Golgi network. Interacts (via C-terminus) with COPG1; the interaction involves dimeric TMED3; however, there are conflicting reports on the interaction. Interacts with GORASP1 and GORASP2.

The protein resides in the endoplasmic reticulum-Golgi intermediate compartment membrane. It localises to the golgi apparatus. It is found in the cis-Golgi network membrane. Its subcellular location is the golgi stack membrane. The protein localises to the endoplasmic reticulum membrane. The protein resides in the cytoplasmic vesicle. It localises to the COPI-coated vesicle membrane. Its function is as follows. Potential role in vesicular protein trafficking, mainly in the early secretory pathway. Contributes to the coupled localization of TMED2 and TMED10 in the cis-Golgi network. This chain is Transmembrane emp24 domain-containing protein 3 (Tmed3), found in Mus musculus (Mouse).